Reading from the N-terminus, the 321-residue chain is Lipoyl synthase (321 aa).

Cys-68, Cys-73, Cys-79, Cys-94, Cys-98, Cys-101, and Ser-308 together coordinate [4Fe-4S] cluster. A Radical SAM core domain is found at 80 to 297 (FNHGTATFMI…KEIALELGFT (218 aa)).

This sequence belongs to the radical SAM superfamily. Lipoyl synthase family. [4Fe-4S] cluster is required as a cofactor.

It is found in the cytoplasm. The catalysed reaction is [[Fe-S] cluster scaffold protein carrying a second [4Fe-4S](2+) cluster] + N(6)-octanoyl-L-lysyl-[protein] + 2 oxidized [2Fe-2S]-[ferredoxin] + 2 S-adenosyl-L-methionine + 4 H(+) = [[Fe-S] cluster scaffold protein] + N(6)-[(R)-dihydrolipoyl]-L-lysyl-[protein] + 4 Fe(3+) + 2 hydrogen sulfide + 2 5'-deoxyadenosine + 2 L-methionine + 2 reduced [2Fe-2S]-[ferredoxin]. The protein operates within protein modification; protein lipoylation via endogenous pathway; protein N(6)-(lipoyl)lysine from octanoyl-[acyl-carrier-protein]: step 2/2. In terms of biological role, catalyzes the radical-mediated insertion of two sulfur atoms into the C-6 and C-8 positions of the octanoyl moiety bound to the lipoyl domains of lipoate-dependent enzymes, thereby converting the octanoylated domains into lipoylated derivatives. This Vibrio vulnificus (strain CMCP6) protein is Lipoyl synthase.